Reading from the N-terminus, the 557-residue chain is TGF-beta receptor type-2 (557 aa).

Residues 1–23 form the signal peptide; the sequence is MPPRLRPLLLRVSLWVLVGSSSP. Over 24–155 the chain is Extracellular; it reads ALLHDRSKEN…KPEEKDEISK (132 aa). 6 cysteine pairs are disulfide-bonded: C41–C74, C44–C61, C51–C57, C67–C91, C111–C126, and C128–C133. N62 and N84 each carry an N-linked (GlcNAc...) asparagine glycan. A helical transmembrane segment spans residues 156–176; that stretch reads VTIISLVPLLVISVAVIVIFY. At 177 to 557 the chain is on the cytoplasmic side; the sequence is AYRTHKKRKL…PEDGSVTTAK (381 aa). Residues 234 to 537 enclose the Protein kinase domain; that stretch reads IELDIVVGKG…FSEFKHHDKL (304 aa). ATP contacts are provided by residues 240–248 and K267; that span reads VGKGRFAEV. The active-site Proton acceptor is D369.

The protein belongs to the protein kinase superfamily. TKL Ser/Thr protein kinase family. TGFB receptor subfamily. Heterohexamer; TGFB1, TGFB2 and TGFB3 homodimeric ligands assemble a functional receptor composed of two TGFBR1 and TGFBR2 heterodimers to form a ligand-receptor heterohexamer. Mg(2+) serves as cofactor. The cofactor is Mn(2+). Phosphorylated on a Ser/Thr residue in the cytoplasmic domain. Detected at low levels in embryonic heart, brain and lung. Detected at high levels in hatchling heart and lung.

It localises to the cell membrane. It is found in the membrane raft. It carries out the reaction L-threonyl-[receptor-protein] + ATP = O-phospho-L-threonyl-[receptor-protein] + ADP + H(+). It catalyses the reaction L-seryl-[receptor-protein] + ATP = O-phospho-L-seryl-[receptor-protein] + ADP + H(+). Transmembrane serine/threonine kinase forming with the TGF-beta type I serine/threonine kinase receptor, TGFBR1, the non-promiscuous receptor for the TGF-beta cytokines TGFB1, TGFB2 and TGFB3. Transduces the TGFB1, TGFB2 and TGFB3 signal from the cell surface to the cytoplasm and is thus regulating a plethora of physiological and pathological processes including cell cycle arrest in epithelial and hematopoietic cells, control of mesenchymal cell proliferation and differentiation, wound healing, extracellular matrix production, immunosuppression and carcinogenesis. The formation of the receptor complex composed of 2 TGFBR1 and 2 TGFBR2 molecules symmetrically bound to the cytokine dimer results in the phosphorylation and the activation of TGFRB1 by the constitutively active TGFBR2. Activated TGFBR1 phosphorylates SMAD2 which dissociates from the receptor and interacts with SMAD4. The SMAD2-SMAD4 complex is subsequently translocated to the nucleus where it modulates the transcription of the TGF-beta-regulated genes. This constitutes the canonical SMAD-dependent TGF-beta signaling cascade. Also involved in non-canonical, SMAD-independent TGF-beta signaling pathways. The chain is TGF-beta receptor type-2 (TGFBR2) from Gallus gallus (Chicken).